A 156-amino-acid polypeptide reads, in one-letter code: Endoribonuclease YbeY (156 aa).

3 residues coordinate Zn(2+): His-122, His-126, and His-132.

The protein belongs to the endoribonuclease YbeY family. The cofactor is Zn(2+).

Its subcellular location is the cytoplasm. Single strand-specific metallo-endoribonuclease involved in late-stage 70S ribosome quality control and in maturation of the 3' terminus of the 16S rRNA. The protein is Endoribonuclease YbeY of Pediococcus pentosaceus (strain ATCC 25745 / CCUG 21536 / LMG 10740 / 183-1w).